The chain runs to 771 residues: Protein lin-54 homolog (771 aa).

Disordered regions lie at residues 21-44 and 68-105; these read AMDE…SAQV and TNAK…IPSL. Residues 72–92 are compositionally biased toward low complexity; it reads STTSSTTQLLLTPSSSSSTTT. 3 positions are modified to phosphoserine: serine 288, serine 292, and serine 308. Residues 544 to 657 form the CRC domain; it reads PRKPCNCTRS…KCMGCKNFEE (114 aa). The tract at residues 546-559 is DNA-binding; it reads KPCNCTRSQCLKLY. Residues cysteine 548, cysteine 550, cysteine 555, cysteine 560, cysteine 562, cysteine 569, cysteine 572, cysteine 574, and cysteine 577 each contribute to the Zn(2+) site. A linker region spans residues 606–619; sequence IGKGKEGESDRRHS. Zn(2+)-binding residues include cysteine 622, cysteine 624, cysteine 629, cysteine 634, cysteine 636, cysteine 643, cysteine 647, cysteine 649, and cysteine 652. The interval 622–635 is DNA-binding; it reads CNCKKSGCLKNYCE.

This sequence belongs to the lin-54 family. Component of the DREAM complex.

It localises to the nucleus. Functionally, component of the DREAM complex, a multiprotein complex that can both act as a transcription activator or repressor depending on the context. Specifically recognizes the consensus motif 5'-TTYRAA-3' in target DNA. The polypeptide is Protein lin-54 homolog (lin54) (Danio rerio (Zebrafish)).